We begin with the raw amino-acid sequence, 210 residues long: MRRRAGPEPHDLLLGMAPAHLPENAPAWVCAALKAGWPVVVRRAPADPARVAIGVRGLAREQRWAGWMPLAAITRRLRPEALGQREPAMLRDLPAWRALRDLRAPLNALGLAWGVTGGAGFELASGVAVLHPDSDLDLLLRTPRPFPRDDALRLLQCFEQCPCRIDLQLQTPAGGVALREWAEGRPRVLAKGSEAPLLLEDPWRIAEVEA.

Catalysis depends on residues aspartate 135 and aspartate 137.

This sequence belongs to the MdcG family.

It carries out the reaction apo-[malonate decarboxylase ACP] + 2'-(5''-triphospho-alpha-D-ribosyl)-3'-dephospho-CoA = holo-[malonate decarboxylase ACP] + diphosphate. In terms of biological role, transfers 2'-(5-triphosphoribosyl)-3'-dephosphocoenzyme-A to the apo-[acyl-carrier-protein] of the malonate decarboxylase to yield holo-[acyl-carrier-protein]. This Pseudomonas aeruginosa (strain ATCC 15692 / DSM 22644 / CIP 104116 / JCM 14847 / LMG 12228 / 1C / PRS 101 / PAO1) protein is Phosphoribosyl-dephospho-CoA transferase.